The primary structure comprises 1538 residues: Ferredoxin-dependent glutamate synthase (1538 aa).

Cys-34 serves as the catalytic For GATase activity. The region spanning 34-431 (CGVGFIADVN…PGQMISVDIF (398 aa)) is the Glutamine amidotransferase type-2 domain. An FMN-binding site is contributed by 1109–1166 (LSEVHQLLAENQLRDRVTLRVDGGLRTGSDIVLAAIMGAEEFGFGTVAMIATGCIMAR). [3Fe-4S] cluster contacts are provided by Cys-1162, Cys-1168, and Cys-1173.

The protein belongs to the glutamate synthase family. Monomer. [3Fe-4S] cluster serves as cofactor. Requires FAD as cofactor. It depends on FMN as a cofactor.

Its subcellular location is the plastid. The protein resides in the chloroplast stroma. It carries out the reaction 2 oxidized [2Fe-2S]-[ferredoxin] + 2 L-glutamate = L-glutamine + 2 reduced [2Fe-2S]-[ferredoxin] + 2-oxoglutarate + 2 H(+). It functions in the pathway amino-acid biosynthesis; L-glutamate biosynthesis via GLT pathway; L-glutamate from 2-oxoglutarate and L-glutamine (ferredoxin route): step 1/1. It participates in energy metabolism; nitrogen metabolism. The protein is Ferredoxin-dependent glutamate synthase (gltB) of Pyropia yezoensis (Susabi-nori).